Here is a 449-residue protein sequence, read N- to C-terminus: MYDLLVRGGQLVREGGVEQADLGVVEERIVEIAPELMGDAREELDARGLHVFPGAVDIHVHFNEPGRTDWEGIRTGSRALVAGGGTVFADMPLNSTPPVLDRTTFEAKQQAAERESYADFALWGGLTPRNLDRLPELAEAGAVGFKAFMSHSGLEEFESPDDFTLYEGMLQARDLGLIVALHAESDAITRGLSTRIRREGGTGVRDYLRSRPAIAEVEAVNRALLLAEETGAKLHLVHLSTGRAVTLAAEARARGVDVSIETCPHYLCFTGEDMERLGAVLKCAPPLRDASEVDALWQAIRAGHIDTIGSDHSPSTLDLKERADFFEVWGGIAGVQSTLTVLLTEGRERGLSLPDIARLSARTPAGHFGLAGKGRLEPGADADLVLVDLDREWVHTPEDLHTRWKFSPYLGRTFRGRVVQTRLRGQTVYAEGRFPHPPQGRFLRPAPAS.

Zn(2+) is bound by residues His59, His61, Lys146, His182, His238, and Asp311. An N6-carboxylysine modification is found at Lys146.

It belongs to the metallo-dependent hydrolases superfamily. Allantoinase family. As to quaternary structure, homotetramer. Requires Zn(2+) as cofactor. Post-translationally, carboxylation allows a single lysine to coordinate two zinc ions.

The catalysed reaction is (S)-allantoin + H2O = allantoate + H(+). It participates in nitrogen metabolism; (S)-allantoin degradation; allantoate from (S)-allantoin: step 1/1. Its function is as follows. Catalyzes the conversion of allantoin (5-ureidohydantoin) to allantoic acid by hydrolytic cleavage of the five-member hydantoin ring. The sequence is that of Allantoinase from Deinococcus geothermalis (strain DSM 11300 / CIP 105573 / AG-3a).